Here is a 501-residue protein sequence, read N- to C-terminus: Mitogen-activated protein kinase 16 (501 aa).

The region spanning 22–313 (YEVTEVVGKG…AAEALTDPYF (292 aa)) is the Protein kinase domain. ATP contacts are provided by residues 28–36 (VGKGSYGVV) and Lys51. Asp148 serves as the catalytic Proton acceptor. Thr184 bears the Phosphothreonine mark. The short motif at 184–186 (TDY) is the TXY element. Tyr186 bears the Phosphotyrosine mark. Positions 477-501 (DEESMSEYMNEAADGVPHKIAQLKT) are disordered.

This sequence belongs to the protein kinase superfamily. CMGC Ser/Thr protein kinase family. MAP kinase subfamily. Post-translationally, dually phosphorylated on Thr-184 and Tyr-186, which activates the enzyme.

It catalyses the reaction L-seryl-[protein] + ATP = O-phospho-L-seryl-[protein] + ADP + H(+). The enzyme catalyses L-threonyl-[protein] + ATP = O-phospho-L-threonyl-[protein] + ADP + H(+). Its activity is regulated as follows. Activated by threonine and tyrosine phosphorylation. The chain is Mitogen-activated protein kinase 16 (MPK16) from Oryza sativa subsp. japonica (Rice).